The primary structure comprises 332 residues: 4-hydroxythreonine-4-phosphate dehydrogenase (332 aa).

Substrate contacts are provided by H138 and T139. 3 residues coordinate a divalent metal cation: H168, H213, and H269. Substrate contacts are provided by K277, N286, and R295.

It belongs to the PdxA family. In terms of assembly, homodimer. It depends on Zn(2+) as a cofactor. Requires Mg(2+) as cofactor. Co(2+) serves as cofactor.

Its subcellular location is the cytoplasm. The enzyme catalyses 4-(phosphooxy)-L-threonine + NAD(+) = 3-amino-2-oxopropyl phosphate + CO2 + NADH. Its pathway is cofactor biosynthesis; pyridoxine 5'-phosphate biosynthesis; pyridoxine 5'-phosphate from D-erythrose 4-phosphate: step 4/5. Functionally, catalyzes the NAD(P)-dependent oxidation of 4-(phosphooxy)-L-threonine (HTP) into 2-amino-3-oxo-4-(phosphooxy)butyric acid which spontaneously decarboxylates to form 3-amino-2-oxopropyl phosphate (AHAP). This Vibrio parahaemolyticus serotype O3:K6 (strain RIMD 2210633) protein is 4-hydroxythreonine-4-phosphate dehydrogenase.